A 358-amino-acid chain; its full sequence is NADH-quinone oxidoreductase subunit H (358 aa).

8 helical membrane-spanning segments follow: residues Leu-29–Trp-49, Gly-95–Ile-115, Leu-130–Ala-150, Phe-176–Val-196, Gly-206–Ile-226, Gly-258–Met-280, Gly-297–Ala-317, and Ile-334–Trp-354.

Belongs to the complex I subunit 1 family. As to quaternary structure, NDH-1 is composed of 14 different subunits. Subunits NuoA, H, J, K, L, M, N constitute the membrane sector of the complex.

It is found in the cell inner membrane. The enzyme catalyses a quinone + NADH + 5 H(+)(in) = a quinol + NAD(+) + 4 H(+)(out). NDH-1 shuttles electrons from NADH, via FMN and iron-sulfur (Fe-S) centers, to quinones in the respiratory chain. The immediate electron acceptor for the enzyme in this species is believed to be ubiquinone. Couples the redox reaction to proton translocation (for every two electrons transferred, four hydrogen ions are translocated across the cytoplasmic membrane), and thus conserves the redox energy in a proton gradient. This subunit may bind ubiquinone. In Acidovorax sp. (strain JS42), this protein is NADH-quinone oxidoreductase subunit H.